The following is a 176-amino-acid chain: Small ribosomal subunit protein uS5c (176 aa).

The S5 DRBM domain maps to 26–89; it reads LVERLIKISR…TDGRKNLIEL (64 aa).

This sequence belongs to the universal ribosomal protein uS5 family. Part of the 30S ribosomal subunit. Contacts protein S4.

The protein localises to the plastid. The protein resides in the chloroplast. In terms of biological role, with S4 and S12 plays an important role in translational accuracy. This chain is Small ribosomal subunit protein uS5c (rps5), found in Phaeodactylum tricornutum (strain CCAP 1055/1).